The following is a 193-amino-acid chain: Ancillary SecYEG translocon subunit (193 aa).

Over 1 to 8 (MLNISKKN) the chain is Cytoplasmic. Residues 9–29 (IIFFILFFLIISLILFNWKYF) form a helical membrane-spanning segment. At 30–193 (SLVNKENLES…MKLNELKEQN (164 aa)) the chain is on the periplasmic side.

Belongs to the YfgM family. Interacts with the SecYEG translocon. Forms a complex with PpiD.

It is found in the cell inner membrane. Functionally, may mediate protein transfer from the SecYEG translocon to the periplasmic chaperone network via its periplasmic C-terminal region. The chain is Ancillary SecYEG translocon subunit from Buchnera aphidicola subsp. Acyrthosiphon pisum (strain APS) (Acyrthosiphon pisum symbiotic bacterium).